The chain runs to 76 residues: uncharacterized protein (76 aa).

This is an uncharacterized protein from Archaeoglobus fulgidus (strain ATCC 49558 / DSM 4304 / JCM 9628 / NBRC 100126 / VC-16).